We begin with the raw amino-acid sequence, 465 residues long: UDP-N-acetylmuramate--L-alanine ligase (465 aa).

115-121 (GAHGKTT) lines the ATP pocket.

It belongs to the MurCDEF family.

The protein resides in the cytoplasm. It catalyses the reaction UDP-N-acetyl-alpha-D-muramate + L-alanine + ATP = UDP-N-acetyl-alpha-D-muramoyl-L-alanine + ADP + phosphate + H(+). Its pathway is cell wall biogenesis; peptidoglycan biosynthesis. In terms of biological role, cell wall formation. The protein is UDP-N-acetylmuramate--L-alanine ligase of Coxiella burnetii (strain CbuG_Q212) (Coxiella burnetii (strain Q212)).